The chain runs to 1349 residues: ABC multidrug transporter mdr1 (1349 aa).

Positions Met-1–Lys-62 are disordered. Over residues Asp-35 to Leu-45 the composition is skewed to basic and acidic residues. Transmembrane regions (helical) follow at residues Ile-108–Phe-128, Tyr-162–Ile-182, Lys-234–Val-254, and Trp-257–Gly-277. An ABC transmembrane type-1 1 domain is found at Leu-112–Asn-402. N-linked (GlcNAc...) asparagine glycosylation occurs at Asn-308. Helical transmembrane passes span Ile-339–Phe-359 and Val-371–Gly-391. The ABC transporter 1 domain occupies Ile-437 to Ala-682. Gly-472–Ser-479 contacts ATP. Transmembrane regions (helical) follow at residues Met-779–Leu-799 and Phe-828–Ile-848. The ABC transmembrane type-1 2 domain occupies Leu-780 to Lys-1069. N-linked (GlcNAc...) asparagine glycans are attached at residues Asn-878 and Asn-893. The next 4 membrane-spanning stretches (helical) occupy residues Gly-896–Met-916, Leu-926–Leu-948, Ala-1016–His-1036, and Phe-1043–Phe-1063. The region spanning Ile-1104–Leu-1342 is the ABC transporter 2 domain. A glycan (N-linked (GlcNAc...) asparagine) is linked at Asn-1126. Gly-1139–Ser-1146 is a binding site for ATP.

The protein belongs to the ABC transporter superfamily. ABCB family. Multidrug resistance exporter (TC 3.A.1.201) subfamily.

The protein resides in the cell membrane. It carries out the reaction voriconazole(in) + ATP + H2O = voriconazole(out) + ADP + phosphate + H(+). In terms of biological role, pleiotropic ABC efflux transporter that may be involved in A.fumigatus adaptation to azoles such as vorizonazole. The sequence is that of ABC multidrug transporter mdr1 from Aspergillus fumigatus (strain ATCC MYA-4609 / CBS 101355 / FGSC A1100 / Af293) (Neosartorya fumigata).